A 641-amino-acid chain; its full sequence is Phosphomethylpyrimidine synthase (641 aa).

The span at 1 to 13 (MNIRSNPDTTRPA) shows a compositional bias: polar residues. Residues 1–21 (MNIRSNPDTTRPAVTTGGLPS) are disordered. Substrate contacts are provided by residues N221, M250, Y279, H315, 335-337 (SRG), 376-379 (DGLR), and E415. Residue H419 coordinates Zn(2+). Position 442 (Y442) interacts with substrate. Residue H483 participates in Zn(2+) binding. [4Fe-4S] cluster contacts are provided by C563, C566, and C571.

This sequence belongs to the ThiC family. Homodimer. Requires [4Fe-4S] cluster as cofactor.

It carries out the reaction 5-amino-1-(5-phospho-beta-D-ribosyl)imidazole + S-adenosyl-L-methionine = 4-amino-2-methyl-5-(phosphooxymethyl)pyrimidine + CO + 5'-deoxyadenosine + formate + L-methionine + 3 H(+). It participates in cofactor biosynthesis; thiamine diphosphate biosynthesis. Its function is as follows. Catalyzes the synthesis of the hydroxymethylpyrimidine phosphate (HMP-P) moiety of thiamine from aminoimidazole ribotide (AIR) in a radical S-adenosyl-L-methionine (SAM)-dependent reaction. In Rhodopseudomonas palustris (strain BisB5), this protein is Phosphomethylpyrimidine synthase.